The sequence spans 218 residues: Peptide methionine sulfoxide reductase MsrA (218 aa).

Cys-57 is a catalytic residue.

It belongs to the MsrA Met sulfoxide reductase family.

The enzyme catalyses L-methionyl-[protein] + [thioredoxin]-disulfide + H2O = L-methionyl-(S)-S-oxide-[protein] + [thioredoxin]-dithiol. The catalysed reaction is [thioredoxin]-disulfide + L-methionine + H2O = L-methionine (S)-S-oxide + [thioredoxin]-dithiol. Its function is as follows. Has an important function as a repair enzyme for proteins that have been inactivated by oxidation. Catalyzes the reversible oxidation-reduction of methionine sulfoxide in proteins to methionine. This chain is Peptide methionine sulfoxide reductase MsrA, found in Brucella anthropi (Ochrobactrum anthropi).